The primary structure comprises 338 residues: Heat-inducible transcription repressor HrcA (338 aa).

This sequence belongs to the HrcA family.

Its function is as follows. Negative regulator of class I heat shock genes (grpE-dnaK-dnaJ and groELS operons). Prevents heat-shock induction of these operons. This Bacillus cereus (strain AH187) protein is Heat-inducible transcription repressor HrcA.